Consider the following 1087-residue polypeptide: Band 4.1-like protein 3 (1087 aa).

Methionine 1 carries the post-translational modification N-acetylmethionine. The tract at residues 1–43 (MTTESGSDSESKPDQEAEPQEAAGAQGRAGAPVPEPPKEEQQQ) is disordered. Threonine 2 carries the N-acetylthreonine; in Band 4.1-like protein 3, N-terminally processed modification. Residues 20 to 32 (QEAAGAQGRAGAP) are compositionally biased toward low complexity. Serine 88 is subject to Phosphoserine. The FERM domain maps to 110 to 391 (MQCKVILLDG…EHHTFFRLLL (282 aa)). Residues 394-513 (APPKKFLTLG…PGLGTDSCPL (120 aa)) are hydrophilic. A phosphoserine mark is found at serine 420, serine 443, and serine 460. Positions 459-469 (ISQTNLITTVT) are enriched in polar residues. Disordered stretches follow at residues 459 to 529 (ISQT…TELR), 541 to 563 (GYEP…GPGR), 675 to 715 (SASL…EDAE), and 937 to 965 (SETL…SPGG). Threonine 469 and threonine 492 each carry phosphothreonine. The segment at 514-860 (SPPSTHCAPT…VVQETVLVEE (347 aa)) is spectrin--actin-binding. Polar residues predominate over residues 516-526 (PSTHCAPTSPT). Residues 681 to 691 (DPSDSSEEETD) show a composition bias toward acidic residues. Positions 698–707 (AADGETTATE) are enriched in low complexity. The residue at position 706 (threonine 706) is a Phosphothreonine. Phosphoserine occurs at positions 708, 960, and 962. The tract at residues 861–1083 (RRVVHASGDA…VHKETEITPE (223 aa)) is C-terminal (CTD). Residues 947–960 (ESSTVKTETISFGS) are compositionally biased toward polar residues. Threonine 1081 bears the Phosphothreonine mark.

In terms of assembly, interacts (via FERM domain) with CADM1. Interacts (via FERM domain) with PRMT3; the interaction is direct and inhibits the protein-arginine N-methyltransferase activity of PRMT3. Interacts with PRMT5. Interacts with PRMT6. As to expression, expressed at high levels in brain, with lower levels in kidney, intestine, and testis. Detected in lung.

It is found in the cytoplasm. It localises to the cytoskeleton. The protein localises to the cell junction. Its subcellular location is the cell membrane. In terms of biological role, tumor suppressor that inhibits cell proliferation and promotes apoptosis. Modulates the activity of protein arginine N-methyltransferases, including PRMT3 and PRMT5. The sequence is that of Band 4.1-like protein 3 from Homo sapiens (Human).